The sequence spans 253 residues: Tryptophan synthase alpha chain (253 aa).

Active-site proton acceptor residues include Glu47 and Asp58.

Belongs to the TrpA family. As to quaternary structure, tetramer of two alpha and two beta chains.

The catalysed reaction is (1S,2R)-1-C-(indol-3-yl)glycerol 3-phosphate + L-serine = D-glyceraldehyde 3-phosphate + L-tryptophan + H2O. It participates in amino-acid biosynthesis; L-tryptophan biosynthesis; L-tryptophan from chorismate: step 5/5. Its function is as follows. The alpha subunit is responsible for the aldol cleavage of indoleglycerol phosphate to indole and glyceraldehyde 3-phosphate. In Syntrophotalea carbinolica (strain DSM 2380 / NBRC 103641 / GraBd1) (Pelobacter carbinolicus), this protein is Tryptophan synthase alpha chain.